Consider the following 453-residue polypeptide: Bifunctional protein GlmU (453 aa).

The pyrophosphorylase stretch occupies residues 1–226 (MAFSVVILAA…EIEVEGINNR (226 aa)). UDP-N-acetyl-alpha-D-glucosamine-binding positions include 8 to 11 (LAAG), Lys22, Gln73, and 78 to 79 (GT). Mg(2+) is bound at residue Asp102. UDP-N-acetyl-alpha-D-glucosamine is bound by residues Gly137, Glu151, Asn166, and Asn224. Asn224 is a binding site for Mg(2+). The tract at residues 227 to 247 (KQLAAIERAFQFEQAQELMMQ) is linker. The N-acetyltransferase stretch occupies residues 248–453 (GVSLLDPHRF…SGWQRPTKPE (206 aa)). Residues Arg330 and Lys348 each contribute to the UDP-N-acetyl-alpha-D-glucosamine site. Catalysis depends on His360, which acts as the Proton acceptor. UDP-N-acetyl-alpha-D-glucosamine-binding residues include Tyr363 and Asn374. Acetyl-CoA contacts are provided by residues Ala377, 383 to 384 (NY), Ser402, Ala420, and Arg437.

This sequence in the N-terminal section; belongs to the N-acetylglucosamine-1-phosphate uridyltransferase family. In the C-terminal section; belongs to the transferase hexapeptide repeat family. As to quaternary structure, homotrimer. Requires Mg(2+) as cofactor.

It is found in the cytoplasm. It carries out the reaction alpha-D-glucosamine 1-phosphate + acetyl-CoA = N-acetyl-alpha-D-glucosamine 1-phosphate + CoA + H(+). The catalysed reaction is N-acetyl-alpha-D-glucosamine 1-phosphate + UTP + H(+) = UDP-N-acetyl-alpha-D-glucosamine + diphosphate. It participates in nucleotide-sugar biosynthesis; UDP-N-acetyl-alpha-D-glucosamine biosynthesis; N-acetyl-alpha-D-glucosamine 1-phosphate from alpha-D-glucosamine 6-phosphate (route II): step 2/2. Its pathway is nucleotide-sugar biosynthesis; UDP-N-acetyl-alpha-D-glucosamine biosynthesis; UDP-N-acetyl-alpha-D-glucosamine from N-acetyl-alpha-D-glucosamine 1-phosphate: step 1/1. It functions in the pathway bacterial outer membrane biogenesis; LPS lipid A biosynthesis. In terms of biological role, catalyzes the last two sequential reactions in the de novo biosynthetic pathway for UDP-N-acetylglucosamine (UDP-GlcNAc). The C-terminal domain catalyzes the transfer of acetyl group from acetyl coenzyme A to glucosamine-1-phosphate (GlcN-1-P) to produce N-acetylglucosamine-1-phosphate (GlcNAc-1-P), which is converted into UDP-GlcNAc by the transfer of uridine 5-monophosphate (from uridine 5-triphosphate), a reaction catalyzed by the N-terminal domain. The protein is Bifunctional protein GlmU of Pseudoalteromonas atlantica (strain T6c / ATCC BAA-1087).